Here is a 274-residue protein sequence, read N- to C-terminus: MKKLFLGALLLVFAGVMAACGSNNGAESGKKEIVVAATKTPHAEILKEAEPLLKEKGYTLKVKVLSDYKMYNKALADKEVDANYFQHIPYLEQEMKENTDYKLVNAGAVHLEPFGIYSKTYKSLKDLPDGATIILTNNVAEQGRMLAMLENAGLITLDSKVETVDATLKDIKKNPKNLEFKKVAPELTAKAYENKEGDAVFINVNYAIQNKLNPKKDAIEVESTKNNPYANIIAVRKGEEDSAKIKALMEVLHSKKIKDFIEKKYDGAVLPVSE.

The first 19 residues, Met-1–Ala-19, serve as a signal peptide directing secretion. Residue Cys-20 is the site of N-palmitoyl cysteine attachment. Cys-20 is lipidated: S-diacylglycerol cysteine.

It belongs to the NlpA lipoprotein family. In terms of assembly, the complex is composed of two ATP-binding proteins (MetN), two transmembrane proteins (MetP) and a solute-binding protein (metQ).

It localises to the cell membrane. Its function is as follows. Part of the ABC transporter complex MetNPQ involved in methionine import. Binds the methionine and transfers it to the membrane-bound permease. It has also been shown to be involved in methionine sulfoxide transport. The chain is Methionine-binding lipoprotein MetQ (metQ) from Bacillus subtilis (strain 168).